A 176-amino-acid chain; its full sequence is MKWRSTTVVCVRKNDSVVMVSDGQVTYGNTIMKGNAKKVRKMGEGNVLAGFAGSVADAMALFDRFEAKYREWGGNLLKSAVELAKDWRTDRVLRRLEALLLVADKKYTFIISGTGEVIQPEDDIASIGSGSPYAIAAGRALLKHTNLSAKEIALESIRIASEICIYTNDNFTIEEL.

Residue Thr6 is part of the active site. Residues Ser161, Cys164, and Thr167 each contribute to the Na(+) site.

This sequence belongs to the peptidase T1B family. HslV subfamily. In terms of assembly, a double ring-shaped homohexamer of HslV is capped on each side by a ring-shaped HslU homohexamer. The assembly of the HslU/HslV complex is dependent on binding of ATP.

The protein localises to the cytoplasm. It carries out the reaction ATP-dependent cleavage of peptide bonds with broad specificity.. With respect to regulation, allosterically activated by HslU binding. In terms of biological role, protease subunit of a proteasome-like degradation complex believed to be a general protein degrading machinery. The polypeptide is ATP-dependent protease subunit HslV (Thermosipho melanesiensis (strain DSM 12029 / CIP 104789 / BI429)).